A 666-amino-acid polypeptide reads, in one-letter code: MEGFMDSGTQTDAVVVLSLAQAAVLGLVSENELFGATISAEAFYPDLGPELTGTAMGEPGPPGPDIYQLACNGRALEEPPEEEVLEVEAAFEKHTRRKTRPPVRLVPKVKFEKAEEEEEQEVYEVSVPGDDKDPGPAEAPAEVASSGCEALVQSSAVKMIDLSAFSRKPRTLRHLPRTPRPELDMAPFDPPFPDPARDGFPEPSMALPGPETLPTECSFEPPHLAPLSNPEPPNMTSTTELVKPEQGFVWQESSEFEADTAGSTVERHKKAQLDRLDINVQIDDSYLVEAGDRQKRWQCRMCEKSYTSKYNLVTHILGHNGIKPHSCPHCSKLFKQPSHLQTHLLTHQGTRPHKCQVCHKAFTQTSHLKRHMLLHSEVKPYSCHFCGRGFAYPSELKAHEVKHESGRCHVCVECGLDFSTLTQLKRHLASHQGPTLYQCLECDKSFHYRSQLQNHMLKHQNVRPFVCTECGMEFSQIHHLKQHSLTHKGVKEFKCEVCGREFTLQANMKRHMLIHTSVRPYQCHICFKTFVQKQTLKTHMIVHSPVKPFKCKVCGKSFNRMYNLLGHMHLHAGSKPFKCPYCSSKFNLKGNLSRHMKVKHGVMDISLDSQDPMMELAGPDPSELDNHQEMEDFEENAYTYSSVDSSAEASTLTEQAMKEMAYYNVL.

Residues Lys110 and Lys113 each participate in a glycyl lysine isopeptide (Lys-Gly) (interchain with G-Cter in SUMO2) cross-link. A disordered region spans residues 113–141 (KAEEEEEQEVYEVSVPGDDKDPGPAEAPA). C2H2-type zinc fingers lie at residues 297–319 (WQCRMCEKSYTSKYNLVTHILGH), 325–347 (HSCPHCSKLFKQPSHLQTHLLTH), and 353–375 (HKCQVCHKAFTQTSHLKRHMLLH). Lys379 participates in a covalent cross-link: Glycyl lysine isopeptide (Lys-Gly) (interchain with G-Cter in SUMO2). C2H2-type zinc fingers lie at residues 381–403 (YSCHFCGRGFAYPSELKAHEVKH), 409–431 (HVCVECGLDFSTLTQLKRHLASH), 437–459 (YQCLECDKSFHYRSQLQNHMLKH), 465–487 (FVCTECGMEFSQIHHLKQHSLTH), 493–515 (FKCEVCGREFTLQANMKRHMLIH), 521–543 (YQCHICFKTFVQKQTLKTHMIVH), 549–571 (FKCKVCGKSFNRMYNLLGHMHLH), and 577–600 (FKCPYCSSKFNLKGNLSRHMKVKH).

This sequence belongs to the krueppel C2H2-type zinc-finger protein family.

It localises to the nucleus. Its function is as follows. May be involved in transcriptional regulation. This is Zinc finger protein 710 (Znf710) from Mus musculus (Mouse).